A 310-amino-acid polypeptide reads, in one-letter code: Oxygen-dependent coproporphyrinogen-III oxidase (310 aa).

Ser-92 lines the substrate pocket. Residues His-96 and His-106 each coordinate a divalent metal cation. The active-site Proton donor is His-106. Residue 108–110 coordinates substrate; it reads NVR. A divalent metal cation-binding residues include His-145 and His-175. Residues 240–275 are important for dimerization; the sequence is YVEFNLIWDRGTLFGLQSGGRTESILMSMPPLARWE. A substrate-binding site is contributed by 258–260; the sequence is GGR.

It belongs to the aerobic coproporphyrinogen-III oxidase family. As to quaternary structure, homodimer. A divalent metal cation serves as cofactor.

It localises to the cytoplasm. It carries out the reaction coproporphyrinogen III + O2 + 2 H(+) = protoporphyrinogen IX + 2 CO2 + 2 H2O. It functions in the pathway porphyrin-containing compound metabolism; protoporphyrin-IX biosynthesis; protoporphyrinogen-IX from coproporphyrinogen-III (O2 route): step 1/1. In terms of biological role, involved in the heme biosynthesis. Catalyzes the aerobic oxidative decarboxylation of propionate groups of rings A and B of coproporphyrinogen-III to yield the vinyl groups in protoporphyrinogen-IX. This is Oxygen-dependent coproporphyrinogen-III oxidase from Pectobacterium carotovorum subsp. carotovorum (strain PC1).